We begin with the raw amino-acid sequence, 301 residues long: tRNA uridine(34) hydroxylase (301 aa).

Residues 120–214 (SAPDVAVIDT…YLEDVPEDQS (95 aa)) enclose the Rhodanese domain. Residue C174 is the Cysteine persulfide intermediate of the active site.

The protein belongs to the TrhO family.

The enzyme catalyses uridine(34) in tRNA + AH2 + O2 = 5-hydroxyuridine(34) in tRNA + A + H2O. In terms of biological role, catalyzes oxygen-dependent 5-hydroxyuridine (ho5U) modification at position 34 in tRNAs. The sequence is that of tRNA uridine(34) hydroxylase from Jannaschia sp. (strain CCS1).